An 838-amino-acid chain; its full sequence is Calmodulin-binding transcription activator 6 (838 aa).

The segment at residues 25–134 is a DNA-binding region (CG-1); sequence VQTMLEEAKS…YRDTQEAATT (110 aa). One copy of the ANK repeat lies at 525–554; sequence QGWTALHWAAYYGREKMVAALLSAGARPNL. IQ domains are found at residues 671 to 700, 713 to 742, and 788 to 817; these read SIIA…IQCR, MRRQ…SVGV, and LERS…THEE. A calmodulin-binding region spans residues 738 to 760; the sequence is WSVGVLEKAVLRWRQKRKGFRGL. A coiled-coil region spans residues 802–822; the sequence is KKAQQDYRRMKLTHEEAQVNH.

This sequence belongs to the CAMTA family. As to expression, expressed in roots, stems, leaves, sepals, petals, stamen filaments, top of carpels, anthers and siliques, but not in stigmas.

Its subcellular location is the nucleus. Its function is as follows. Transcription activator that binds calmodulin in a calcium-dependent manner in vitro. Binds to the DNA consensus sequence 5'-[ACG]CGCG[GTC]-3'. Regulates transcriptional activity in response to calcium signals. The sequence is that of Calmodulin-binding transcription activator 6 from Arabidopsis thaliana (Mouse-ear cress).